Consider the following 208-residue polypeptide: Uracil phosphoribosyltransferase (208 aa).

5-phospho-alpha-D-ribose 1-diphosphate is bound by residues R78, R103, and 130-138; that span reads DPMLATGGS. Uracil contacts are provided by residues I193 and 198 to 200; that span reads GDA. D199 provides a ligand contact to 5-phospho-alpha-D-ribose 1-diphosphate.

It belongs to the UPRTase family. Requires Mg(2+) as cofactor.

The enzyme catalyses UMP + diphosphate = 5-phospho-alpha-D-ribose 1-diphosphate + uracil. Its pathway is pyrimidine metabolism; UMP biosynthesis via salvage pathway; UMP from uracil: step 1/1. With respect to regulation, allosterically activated by GTP. Functionally, catalyzes the conversion of uracil and 5-phospho-alpha-D-ribose 1-diphosphate (PRPP) to UMP and diphosphate. The sequence is that of Uracil phosphoribosyltransferase from Shewanella sp. (strain ANA-3).